The following is a 266-amino-acid chain: Putative cysteine-rich repeat secretory protein 20 (266 aa).

Positions 1–33 are cleaved as a signal peptide; it reads MYFPPSSVPKRLVLVHISAVVAIKLLLIRSVSS. 2 consecutive Gnk2-homologous domains span residues 40-142 and 148-261; these read YLQH…SIRN and YNNN…LYPF.

It belongs to the cysteine-rich repeat secretory protein family.

The protein resides in the secreted. This Arabidopsis thaliana (Mouse-ear cress) protein is Putative cysteine-rich repeat secretory protein 20 (CRRSP20).